Here is a 94-residue protein sequence, read N- to C-terminus: Lipoate-protein ligase A subunit 2 (94 aa).

As to quaternary structure, heterodimer composed of LplA and LplB.

The enzyme catalyses L-lysyl-[lipoyl-carrier protein] + (R)-lipoate + ATP = N(6)-[(R)-lipoyl]-L-lysyl-[lipoyl-carrier protein] + AMP + diphosphate + H(+). Its pathway is protein modification; protein lipoylation via exogenous pathway; protein N(6)-(lipoyl)lysine from lipoate: step 1/2. It participates in protein modification; protein lipoylation via exogenous pathway; protein N(6)-(lipoyl)lysine from lipoate: step 2/2. Its function is as follows. Part of a lipoate-protein ligase complex that catalyzes both the ATP-dependent activation of exogenously supplied lipoate to lipoyl-AMP and the transfer of the activated lipoyl onto the lipoyl domains of lipoate-dependent enzymes. Can also use octanoate as substrate. The sequence is that of Lipoate-protein ligase A subunit 2 (lplB) from Thermoplasma acidophilum (strain ATCC 25905 / DSM 1728 / JCM 9062 / NBRC 15155 / AMRC-C165).